The following is a 273-amino-acid chain: Dermonecrotic toxin LdSicTox-alphaIB3b (273 aa).

His5 is a catalytic residue. 2 residues coordinate Mg(2+): Glu25 and Asp27. His41 functions as the Nucleophile in the catalytic mechanism. Cystine bridges form between Cys45–Cys51 and Cys47–Cys190. Asp85 lines the Mg(2+) pocket.

Belongs to the arthropod phospholipase D family. Class II subfamily. Mg(2+) serves as cofactor. In terms of tissue distribution, expressed by the venom gland.

It localises to the secreted. The enzyme catalyses an N-(acyl)-sphingosylphosphocholine = an N-(acyl)-sphingosyl-1,3-cyclic phosphate + choline. It catalyses the reaction an N-(acyl)-sphingosylphosphoethanolamine = an N-(acyl)-sphingosyl-1,3-cyclic phosphate + ethanolamine. It carries out the reaction a 1-acyl-sn-glycero-3-phosphocholine = a 1-acyl-sn-glycero-2,3-cyclic phosphate + choline. The catalysed reaction is a 1-acyl-sn-glycero-3-phosphoethanolamine = a 1-acyl-sn-glycero-2,3-cyclic phosphate + ethanolamine. In terms of biological role, dermonecrotic toxins cleave the phosphodiester linkage between the phosphate and headgroup of certain phospholipids (sphingolipid and lysolipid substrates), forming an alcohol (often choline) and a cyclic phosphate. This toxin acts on sphingomyelin (SM). It may also act on ceramide phosphoethanolamine (CPE), lysophosphatidylcholine (LPC) and lysophosphatidylethanolamine (LPE), but not on lysophosphatidylserine (LPS), and lysophosphatidylglycerol (LPG). It acts by transphosphatidylation, releasing exclusively cyclic phosphate products as second products. Induces dermonecrosis, hemolysis, increased vascular permeability, edema, inflammatory response, and platelet aggregation. This is Dermonecrotic toxin LdSicTox-alphaIB3b from Loxosceles deserta (Desert recluse spider).